A 651-amino-acid chain; its full sequence is DNA mismatch repair protein MutL (651 aa).

The tract at residues 383 to 405 (TAAEEPTPAPTSPDLEIGDLDDQ) is disordered.

It belongs to the DNA mismatch repair MutL/HexB family.

Functionally, this protein is involved in the repair of mismatches in DNA. It is required for dam-dependent methyl-directed DNA mismatch repair. May act as a 'molecular matchmaker', a protein that promotes the formation of a stable complex between two or more DNA-binding proteins in an ATP-dependent manner without itself being part of a final effector complex. In Lacticaseibacillus casei (strain BL23) (Lactobacillus casei), this protein is DNA mismatch repair protein MutL.